Here is a 682-residue protein sequence, read N- to C-terminus: Heat shock 70 kDa protein 9, mitochondrial (682 aa).

The N-terminal 46 residues, 1–46 (MASVALLRSFRRREVQMASVSAFKSVSANGKNSMFGKLGYLARPFC), are a transit peptide targeting the mitochondrion. The interval 640–682 (SKIGEHMSKGSGSSGSDGSSGEGTSGTEQTPEAEFEEASGSRK) is disordered. Positions 651–663 (GSSGSDGSSGEGT) are enriched in gly residues.

It belongs to the heat shock protein 70 (TC 1.A.33) family. DnaK subfamily. In terms of assembly, interacts with HSCB.

It is found in the mitochondrion. The protein localises to the cytoplasm. It localises to the cytosol. In terms of biological role, chaperone involved in the maturation of iron-sulfur [Fe-S] cluster-containing proteins. Has a low intrinsic ATPase activity which is markedly stimulated by HSCB and ISU1. In cooperation with other chaperones, Hsp70s are key components that facilitate folding of de novo synthesized proteins, assist translocation of precursor proteins into organelles, and are responsible for degradation of damaged protein under stress conditions. This Arabidopsis thaliana (Mouse-ear cress) protein is Heat shock 70 kDa protein 9, mitochondrial.